Here is a 272-residue protein sequence, read N- to C-terminus: Dermonecrotic toxin SpeSicTox-betaIB2b (272 aa).

The active site involves histidine 5. Residues glutamate 25 and aspartate 27 each contribute to the Mg(2+) site. Residue histidine 41 is the Nucleophile of the active site. 2 disulfides stabilise this stretch: cysteine 45/cysteine 51 and cysteine 47/cysteine 191. Aspartate 85 contacts Mg(2+).

Belongs to the arthropod phospholipase D family. Class II subfamily. It depends on Mg(2+) as a cofactor. As to expression, expressed by the venom gland.

Its subcellular location is the secreted. The enzyme catalyses an N-(acyl)-sphingosylphosphocholine = an N-(acyl)-sphingosyl-1,3-cyclic phosphate + choline. It carries out the reaction an N-(acyl)-sphingosylphosphoethanolamine = an N-(acyl)-sphingosyl-1,3-cyclic phosphate + ethanolamine. The catalysed reaction is a 1-acyl-sn-glycero-3-phosphocholine = a 1-acyl-sn-glycero-2,3-cyclic phosphate + choline. It catalyses the reaction a 1-acyl-sn-glycero-3-phosphoethanolamine = a 1-acyl-sn-glycero-2,3-cyclic phosphate + ethanolamine. Its function is as follows. Dermonecrotic toxins cleave the phosphodiester linkage between the phosphate and headgroup of certain phospholipids (sphingolipid and lysolipid substrates), forming an alcohol (often choline) and a cyclic phosphate. This toxin acts on sphingomyelin (SM). It may also act on ceramide phosphoethanolamine (CPE), lysophosphatidylcholine (LPC) and lysophosphatidylethanolamine (LPE), but not on lysophosphatidylserine (LPS), and lysophosphatidylglycerol (LPG). It acts by transphosphatidylation, releasing exclusively cyclic phosphate products as second products. Induces dermonecrosis, hemolysis, increased vascular permeability, edema, inflammatory response, and platelet aggregation. The sequence is that of Dermonecrotic toxin SpeSicTox-betaIB2b from Sicarius peruensis (Six-eyed sand spider).